We begin with the raw amino-acid sequence, 244 residues long: Neurogenin-1 (244 aa).

2 disordered regions span residues 1–27 (MPAP…SSFL) and 39–82 (LAST…ARVR). The span at 10-27 (SDLDCSSSNSSSDLSSFL) shows a compositional bias: low complexity. The bHLH domain occupies 93–145 (SRRVKANDRERNRMHNLNAALDALRSVLPSFPDDTKLTKIETLRFAYNYIWAL).

In terms of assembly, efficient DNA binding requires dimerization with another bHLH protein. Expression restricted to the embryonic nervous system.

The protein localises to the nucleus. Acts as a transcriptional regulator. Involved in the initiation of neuronal differentiation. Activates transcription by binding to the E box (5'-CANNTG-3'). Associates with chromatin to enhancer regulatory elements in genes encoding key transcriptional regulators of neurogenesis. The chain is Neurogenin-1 (Neurog1) from Mus musculus (Mouse).